Consider the following 426-residue polypeptide: Glutamate-1-semialdehyde 2,1-aminomutase (426 aa).

Residue Lys265 is modified to N6-(pyridoxal phosphate)lysine.

Belongs to the class-III pyridoxal-phosphate-dependent aminotransferase family. HemL subfamily. Homodimer. Pyridoxal 5'-phosphate is required as a cofactor.

The protein resides in the cytoplasm. The enzyme catalyses (S)-4-amino-5-oxopentanoate = 5-aminolevulinate. Its pathway is porphyrin-containing compound metabolism; protoporphyrin-IX biosynthesis; 5-aminolevulinate from L-glutamyl-tRNA(Glu): step 2/2. In Shigella sonnei (strain Ss046), this protein is Glutamate-1-semialdehyde 2,1-aminomutase.